Reading from the N-terminus, the 862-residue chain is Bifunctional uridylyltransferase/uridylyl-removing enzyme (862 aa).

Residues 1 to 328 form a uridylyltransferase region; that stretch reads MSTAAIPTDA…FPRRAGAAIV (328 aa). Residues 329 to 685 are uridylyl-removing; it reads INERFQAVRE…ARVSDADQGV (357 aa). The 117-residue stretch at 447–563 folds into the HD domain; that stretch reads VDQHIMMVLR…GRFADTVGTE (117 aa). 2 consecutive ACT domains span residues 686-765 and 794-862; these read QVMV…DRPS and ILSL…RLHI.

Belongs to the GlnD family. Mg(2+) serves as cofactor.

The enzyme catalyses [protein-PII]-L-tyrosine + UTP = [protein-PII]-uridylyl-L-tyrosine + diphosphate. It catalyses the reaction [protein-PII]-uridylyl-L-tyrosine + H2O = [protein-PII]-L-tyrosine + UMP + H(+). Its activity is regulated as follows. Uridylyltransferase (UTase) activity is inhibited by glutamine, while glutamine activates uridylyl-removing (UR) activity. Modifies, by uridylylation and deuridylylation, the PII regulatory proteins (GlnB and homologs), in response to the nitrogen status of the cell that GlnD senses through the glutamine level. Under low glutamine levels, catalyzes the conversion of the PII proteins and UTP to PII-UMP and PPi, while under higher glutamine levels, GlnD hydrolyzes PII-UMP to PII and UMP (deuridylylation). Thus, controls uridylylation state and activity of the PII proteins, and plays an important role in the regulation of nitrogen assimilation and metabolism. This chain is Bifunctional uridylyltransferase/uridylyl-removing enzyme, found in Aromatoleum aromaticum (strain DSM 19018 / LMG 30748 / EbN1) (Azoarcus sp. (strain EbN1)).